A 395-amino-acid polypeptide reads, in one-letter code: Flap endonuclease 1 (395 aa).

An N-domain region spans residues 1 to 104 (MGIKHLYQII…GELAKRIARK (104 aa)). Mg(2+) is bound at residue D34. R47 and R70 together coordinate DNA. Residue D86 coordinates Mg(2+). The tract at residues 103-123 (RKQEAAEQHEEAKETGTTEDV) is disordered. Residues 122 to 253 (DVEKFSRRTV…NTALKLIRDH (132 aa)) are I-domain. The Mg(2+) site is built by E158, E160, D179, and D181. A DNA-binding site is contributed by E158. 2 residues coordinate DNA: G231 and D233. A Mg(2+)-binding site is contributed by D233. Residues 341-349 (QQSRLEGFF) form an interaction with PCNA region. Residues 356–389 (DEEKASLKRKHEEKLEAAKKKKKEDAKAKREAKS) are compositionally biased toward basic and acidic residues. The disordered stretch occupies residues 356–395 (DEEKASLKRKHEEKLEAAKKKKKEDAKAKREAKSRPKGTA).

The protein belongs to the XPG/RAD2 endonuclease family. FEN1 subfamily. Interacts with PCNA. Three molecules of FEN1 bind to one PCNA trimer with each molecule binding to one PCNA monomer. PCNA stimulates the nuclease activity without altering cleavage specificity. Mg(2+) is required as a cofactor. Phosphorylated. Phosphorylation upon DNA damage induces relocalization to the nuclear plasma.

Its subcellular location is the nucleus. The protein resides in the nucleolus. It localises to the nucleoplasm. It is found in the mitochondrion. Functionally, structure-specific nuclease with 5'-flap endonuclease and 5'-3' exonuclease activities involved in DNA replication and repair. During DNA replication, cleaves the 5'-overhanging flap structure that is generated by displacement synthesis when DNA polymerase encounters the 5'-end of a downstream Okazaki fragment. It enters the flap from the 5'-end and then tracks to cleave the flap base, leaving a nick for ligation. Also involved in the long patch base excision repair (LP-BER) pathway, by cleaving within the apurinic/apyrimidinic (AP) site-terminated flap. Acts as a genome stabilization factor that prevents flaps from equilibrating into structures that lead to duplications and deletions. Also possesses 5'-3' exonuclease activity on nicked or gapped double-stranded DNA, and exhibits RNase H activity. Also involved in replication and repair of rDNA and in repairing mitochondrial DNA. In Uncinocarpus reesii (strain UAMH 1704), this protein is Flap endonuclease 1.